The chain runs to 177 residues: Phycocyanin-645 beta chain (177 aa).

A mesobiliverdin-binding site is contributed by Y18. The (2R,3E)-phycocyanobilin site is built by K28, N35, and D39. C50, D54, and C61 together coordinate 15,16-dihydrobiliverdin. Residues R77, C82, R84, and D85 each contribute to the (2R,3E)-phycocyanobilin site. Q148 serves as a coordination point for 15,16-dihydrobiliverdin. P154, G156, and C158 together coordinate (2R,3E)-phycocyanobilin.

Belongs to the phycobiliprotein family. As to quaternary structure, heterotetramer of 2 different alpha chains and 2 identical beta chains which form 2 alpha-beta heterodimers within the heterotetramer. Post-translationally, contains two phycocyanobilin chromophores, one mesobiliverdin chromophore and one 15,16-dihydrobiliverdin chromophore with binding mediated by both the alpha and beta subunits.

The protein resides in the plastid. It is found in the chloroplast thylakoid membrane. Functionally, light-harvesting photosynthetic tetrapyrrole chromophore-protein from the phycobiliprotein complex. In Chroomonas sp, this protein is Phycocyanin-645 beta chain.